The primary structure comprises 386 residues: ATP phosphoribosyltransferase regulatory subunit (386 aa).

The protein belongs to the class-II aminoacyl-tRNA synthetase family. HisZ subfamily. In terms of assembly, heteromultimer composed of HisG and HisZ subunits.

It localises to the cytoplasm. Its pathway is amino-acid biosynthesis; L-histidine biosynthesis; L-histidine from 5-phospho-alpha-D-ribose 1-diphosphate: step 1/9. Its function is as follows. Required for the first step of histidine biosynthesis. May allow the feedback regulation of ATP phosphoribosyltransferase activity by histidine. The protein is ATP phosphoribosyltransferase regulatory subunit of Limosilactobacillus fermentum (strain NBRC 3956 / LMG 18251) (Lactobacillus fermentum).